Consider the following 487-residue polypeptide: MQKSWLVLLVACLGLQGTTALTLHRRDLPAVVSLDIKRNNAVDPVARDRMRRKRDKTVEQNLDNEETLYFCNITLGTPKQSLRLVLDTGSSDLWCNAANSTLCSSRDQPCNASGSYDPSSSSSYAYTSSDFNISYADGTGAAGDYVTDTIHIGGATVKDFQFGVGYSSSSAEGVLGIGYTTNEVQVGRLGKSAYANLPQAMVKNGLIQSNAYSLWLNDLGADTGSILFGGVNTEKYHGELQTLPIQTVNGVYSEFIIALTGVSLSSASSHHNYSSSDALPAAVLLDSGSSLTYLPNSIVQDIYDDLGVTYESSSGVGYVPCSLAQQNINVTYTFSSPIITVGIDELVLDAGDLRFRNGARACIFGIVPAGDSTAVLGDTFLRSAYVVYDLSNNEISLANTKFNSTKDNILEIGTGDDSVPGATQVSNPVTSVVADGSGARIGGPTGEIFTDIPSATSSGGAAAPAGPTDVPKHLVLGAAAIGYVLAF.

The signal sequence occupies residues 1 to 20; it reads MQKSWLVLLVACLGLQGTTA. In terms of domain architecture, Peptidase A1 spans 69–398; it reads YFCNITLGTP…DLSNNEISLA (330 aa). An N-linked (GlcNAc...) asparagine glycan is attached at Asn-72. Asp-87 is a catalytic residue. N-linked (GlcNAc...) asparagine glycosylation is found at Asn-99, Asn-111, Asn-132, and Asn-272. Residue Asp-286 is part of the active site. 2 N-linked (GlcNAc...) asparagine glycosylation sites follow: Asn-329 and Asn-403. Ala-463 is lipidated: GPI-anchor amidated alanine. Residues 464-487 constitute a propeptide, removed in mature form; that stretch reads PAGPTDVPKHLVLGAAAIGYVLAF.

It belongs to the peptidase A1 family.

It localises to the cell membrane. Its function is as follows. Probable GPI-anchored aspartic-type endopeptidase. The sequence is that of Probable aspartic-type endopeptidase opsB (opsB) from Aspergillus oryzae (strain ATCC 42149 / RIB 40) (Yellow koji mold).